The primary structure comprises 1238 residues: uncharacterized protein (1238 aa).

7 disordered regions span residues 22–83 (LQSA…QEHL), 96–150 (SSRQ…IASP), 169–250 (FEPD…HQML), 264–694 (QLNS…AAMV), 739–915 (TKAA…SVPE), 936–955 (THSA…APHE), and 1057–1089 (PKIS…QCSS). Residues 35-49 (QPPNQQPHQTQQQQQ) show a composition bias toward low complexity. The segment covering 58–72 (PSIQNLTTNATPTST) has biased composition (polar residues). A compositionally biased stretch (low complexity) spans 73–83 (QLQQQQQQEHL). The span at 96 to 110 (SSRQNQGAPSGNLSN) shows a compositional bias: polar residues. Over residues 125–145 (SVSGNTNHTGSNSSSNSGSNN) the composition is skewed to low complexity. Polar residues predominate over residues 188–204 (SASSASKLPTHNVQQQH). 3 stretches are compositionally biased toward low complexity: residues 272–287 (SYQH…QSHP), 309–334 (PLLT…SSQH), and 393–406 (SNEE…NSSN). The span at 433–450 (SKPQHPQQAANLNNSCSP) shows a compositional bias: polar residues. Phosphoserine is present on Ser-453. Polar residues predominate over residues 463 to 472 (PFSTQKQSQT). Residues 523 to 536 (TEQHRMQQDDEPPK) show a composition bias toward basic and acidic residues. 2 stretches are compositionally biased toward low complexity: residues 549–570 (QSNS…SQSS) and 632–641 (TTAAVAAPPA). Thr-642 carries the post-translational modification Phosphothreonine. Basic and acidic residues predominate over residues 678–688 (ERISSPEKPAE). Phosphoserine occurs at positions 682, 749, and 753. Over residues 755–764 (IPQSRSTSTP) the composition is skewed to polar residues. A phosphoserine mark is found at Ser-793 and Ser-799. Positions 832 to 860 (STSAAAAAALAARQLSEAASATKSKPAAG) are enriched in low complexity. Residues 861–874 (AKKKNAGVKGKKGS) show a composition bias toward basic residues. Basic and acidic residues predominate over residues 937 to 947 (HSAEDVNEKQT). Polar residues predominate over residues 1071 to 1089 (DSSISYSDDPNESRSQCSS). A C2HC pre-PHD-type; degenerate zinc finger spans residues 1089 to 1131 (SVDLLDCSTESKFVETFRGMGKTSENGFEVWLHEDCAVWSNDI). A Phosphoserine modification is found at Ser-1099. The PHD-type zinc finger occupies 1151 to 1199 (YQCVLCQQTGASICCFQRCCKAAAHVPCGRSANWSLSEEDRKVYCHLHR).

This is an uncharacterized protein from Drosophila melanogaster (Fruit fly).